The primary structure comprises 95 residues: Integration host factor subunit beta (95 aa).

It belongs to the bacterial histone-like protein family. As to quaternary structure, heterodimer of an alpha and a beta chain.

Its function is as follows. This protein is one of the two subunits of integration host factor, a specific DNA-binding protein that functions in genetic recombination as well as in transcriptional and translational control. The protein is Integration host factor subunit beta of Psychromonas ingrahamii (strain DSM 17664 / CCUG 51855 / 37).